Here is a 137-residue protein sequence, read N- to C-terminus: MLVPKRVKHRREFRGKMRGEAKGGKEVSFGEYGLQATTSSWITNRQIEAARIAMTRYMKRGGKVWIKIFPHKSYTAKAIGVRMGSGKGAPEGWVSPVKRGKVMFEIAGVSEEVAREAFRLAGHKLPVKVKFVKREAE.

The protein belongs to the universal ribosomal protein uL16 family. Part of the 50S ribosomal subunit.

Binds 23S rRNA and is also seen to make contacts with the A and possibly P site tRNAs. This is Large ribosomal subunit protein uL16 from Streptococcus uberis (strain ATCC BAA-854 / 0140J).